We begin with the raw amino-acid sequence, 814 residues long: S-layer protein sap (814 aa).

The first 29 residues, 1 to 29, serve as a signal peptide directing secretion; sequence MAKTNSYKKVIAGTMTAAMVAGVVSPVAA. 3 SLH domains span residues 30 to 93, 94 to 150, and 152 to 214; these read AGKT…DAKP, SFAD…KVNG, and PATK…AAKV. In terms of domain architecture, BIG2 spans 403–479; sequence FTSKDFKQNN…TVKDSKGKEL (77 aa).

In terms of processing, probably glycosylated.

Its subcellular location is the secreted. It localises to the cell wall. The protein resides in the S-layer. Its function is as follows. The S-layer is a paracrystalline mono-layered assembly of proteins which coat the surface of bacteria. The chain is S-layer protein sap (sap) from Bacillus anthracis.